A 379-amino-acid polypeptide reads, in one-letter code: ATP-sensitive inward rectifier potassium channel 10 (379 aa).

The Cytoplasmic segment spans residues 1-61 (MTSVAKVYYS…LKDLWTTFID (61 aa)). R36 provides a ligand contact to 1,2-dioctanoyl-sn-glycero-3-phospho-(1D-myo-inositol-4,5-bisphosphate). Residues 62-88 (MQWRYKLLLFSATFAGTWFLFGVVWYL) traverse the membrane as a helical segment. The Extracellular portion of the chain corresponds to 89–114 (VAVAHGDLLELDPPANHTPCVVQVHT). Cysteines 108 and 140 form a disulfide. The discontinuously helical; Pore-forming intramembrane region spans 115-131 (LTGAFLFSLESQTTIGY). A Selectivity filter motif is present at residues 128 to 133 (TIGYGF). Residues 132–140 (GFRYISEEC) are Extracellular-facing. A helical membrane pass occupies residues 141–166 (PLAIVLLIAQLVLTTILEIFITGTFL). The Cytoplasmic segment spans residues 167–379 (AKIARPKKRA…SALSVRISNV (213 aa)). The 1,2-dioctanoyl-sn-glycero-3-phospho-(1D-myo-inositol-4,5-bisphosphate) site is built by K168, R171, and K173. Residue 210 to 217 (GCQVTGKL) coordinates ATP.

It belongs to the inward rectifier-type potassium channel (TC 1.A.2.1) family. KCNJ10 subfamily. Homotetramer. In kidney cells, it forms heteromeric channels with Kir5.1/KCNJ16; this interaction is required for KCNJ16 localization to the basolateral membrane. Interacts with MAGI1, alone and possibly as a heteromer with KCNJ16; this interaction may facilitate KCNJ10/KCNJ16 potassium channel expression at the basolateral membrane in kidney cells. Interacts with PATJ. Expressed in kidney (at protein level). In the nephron, expressed in the distal convoluted tubule, the connecting tubule, the collecting duct and cortical thick ascending limbs.

Its subcellular location is the membrane. The protein localises to the basolateral cell membrane. It catalyses the reaction K(+)(in) = K(+)(out). With respect to regulation, channel activity is strongly regulated by variations of cytosolic pH; channels are activated by alkaline and inhibited by acidic pH values. Inhibited by Ba(2+) and Cs(+). Activated by phosphatidylinositol 4,5 biphosphate (PtdIns(4,5)P2). In terms of biological role, may be responsible for potassium buffering action of glial cells in the brain. Inward rectifier potassium channels are characterized by a greater tendency to allow potassium to flow into the cell rather than out of it. Their voltage dependence is regulated by the concentration of extracellular potassium; as external potassium is raised, the voltage range of the channel opening shifts to more positive voltages. The inward rectification is mainly due to the blockage of outward current by internal magnesium. Can be blocked by extracellular barium and cesium. In the kidney, together with KCNJ16, mediates basolateral K(+) recycling in distal tubules; this process is critical for Na(+) reabsorption at the tubules. The sequence is that of ATP-sensitive inward rectifier potassium channel 10 from Homo sapiens (Human).